A 1290-amino-acid polypeptide reads, in one-letter code: 1-phosphatidylinositol 4,5-bisphosphate phosphodiesterase gamma-1 (1290 aa).

Position 2 is an N-acetylalanine (alanine 2). Positions 27–142 (RSLEVGTVMT…WIKGLTWLME (116 aa)) constitute a PH 1 domain. The region spanning 152 to 187 (QIERWLRKQFYSVDRNREDRISAKDLKNMLSQVNYR) is the EF-hand domain. Residues aspartate 165, asparagine 167, glutamate 169, arginine 171, and aspartate 176 each coordinate Ca(2+). Residues 320–464 (DTMNNPLSHY…LKRKILIKHK (145 aa)) enclose the PI-PLC X-box domain. Residues histidine 335 and histidine 380 contribute to the active site. Positions 489–523 (SIKNGILYLEDPVNHEWYPHYFVLTSSKIYYSEET) constitute a PH 2; first part domain. Tyrosine 506 is subject to Phosphotyrosine. The segment at 522–544 (ETSSDQGNEDEEEPKEVSSSTEL) is disordered. 2 consecutive SH2 domains span residues 550–657 (WFHG…SEPV) and 668–756 (WYHA…RYPI). Phosphotyrosine; by SYK is present on tyrosine 771. At tyrosine 775 the chain carries Phosphotyrosine. Residue tyrosine 783 is modified to Phosphotyrosine; by ITK, SYK and TXK. The SH3 domain occupies 791-851 (TFKCAVKALF…PSNYVEEMVN (61 aa)). In terms of domain architecture, PH 2; second part spans 895–931 (FVFSISMASVAHWSLDVAADSQEELQDWVKKIREVAQ). One can recognise a PI-PLC Y-box domain in the interval 953 to 1070 (LSELVVYCRP…GYVLQPSTMR (118 aa)). Tyrosine 977 carries the post-translational modification Phosphotyrosine. Residues 1071–1194 (DEAFDPFDKS…TGYRAVPLKN (124 aa)) form the C2 domain. Phosphoserine occurs at positions 1221, 1222, 1227, 1233, and 1248. Tyrosine 1253 bears the Phosphotyrosine mark. At serine 1263 the chain carries Phosphoserine. A disordered region spans residues 1271 to 1290 (FDSRERRAPRRTRVNGDNRL).

In terms of assembly, interacts with AGAP2 via its SH3 domain. Interacts (via SH2 domain) with RET. Interacts with FLT1 (tyrosine-phosphorylated). Interacts (via SH2 domain) with FGFR1, FGFR2, FGFR3 and FGFR4 (phosphorylated). Interacts with LAT (phosphorylated) upon TCR activation. Interacts (via SH3 domain) with the Pro-rich domain of TNK1. Associates with BLNK, VAV1, GRB2 and NCK1 in a B-cell antigen receptor-dependent fashion. Interacts with CBLB in activated T-cells; which inhibits phosphorylation. Interacts with SHB. Interacts (via SH3 domain) with the Arg/Gly-rich-flanked Pro-rich domains of KHDRBS1/SAM68. This interaction is selectively regulated by arginine methylation of KHDRBS1/SAM68. Interacts with INPP5D/SHIP1, THEMIS and CLNK. Interacts with AXL, FLT4 and KIT. Interacts with RALGPS1. Interacts (via the SH2 domains) with VIL1 (phosphorylated at C-terminus tyrosine phosphorylation sites). Interacts (via SH2 domain) with PDGFRA and PDGFRB (tyrosine phosphorylated). Interacts with PIP5K1C. Interacts with NTRK1 and NTRK2 (phosphorylated upon ligand-binding). Interacts with SYK; activates PLCG1. Interacts with GRB2, LAT and THEMIS upon TCR activation in thymocytes. Interacts with TESPA1; the association is increased with prolonged stimulation of the TCR and may facilitate the assembly of the LAT signalosome. Interacts (via C-terminal proline-rich domain (PRD)) with PLCG1 (via SH3 domain); this interaction leads to guanine nucleotide exchange from PlCG1 to DNM1 and enhances DNM1-dependent endocytosis. (Microbial infection) Interacts (via SH3 domain) with HEV ORF3 protein. Ca(2+) is required as a cofactor. Post-translationally, tyrosine phosphorylated in response to signaling via activated FLT3, KIT and PDGFRA. Tyrosine phosphorylated by activated FGFR1, FGFR2, FGFR3 and FGFR4. Tyrosine phosphorylated by activated FLT1 and KDR. Tyrosine phosphorylated by activated PDGFRB. The receptor-mediated activation of PLCG1 involves its phosphorylation by tyrosine kinases, in response to ligation of a variety of growth factor receptors and immune system receptors. For instance, SYK phosphorylates and activates PLCG1 in response to ligation of the B-cell receptor. May be dephosphorylated by PTPRJ. Phosphorylated by ITK and TXK on Tyr-783 upon TCR activation in T-cells. Ubiquitinated by CBLB in activated T-cells.

It is found in the cell projection. The protein localises to the lamellipodium. It localises to the ruffle. It catalyses the reaction a 1,2-diacyl-sn-glycero-3-phospho-(1D-myo-inositol-4,5-bisphosphate) + H2O = 1D-myo-inositol 1,4,5-trisphosphate + a 1,2-diacyl-sn-glycerol + H(+). It carries out the reaction a 1,2-diacyl-sn-glycero-3-phospho-(1D-myo-inositol) + H2O = 1D-myo-inositol 1-phosphate + a 1,2-diacyl-sn-glycerol + H(+). Activated by phosphorylation on tyrosine residues. Its function is as follows. Mediates the production of the second messenger molecules diacylglycerol (DAG) and inositol 1,4,5-trisphosphate (IP3). Plays an important role in the regulation of intracellular signaling cascades. Becomes activated in response to ligand-mediated activation of receptor-type tyrosine kinases, such as PDGFRA, PDGFRB, EGFR, FGFR1, FGFR2, FGFR3 and FGFR4. Plays a role in actin reorganization and cell migration. Guanine nucleotide exchange factor that binds the GTPase DNM1 and catalyzes the dissociation of GDP, allowing a GTP molecule to bind in its place, therefore enhancing DNM1-dependent endocytosis. This chain is 1-phosphatidylinositol 4,5-bisphosphate phosphodiesterase gamma-1, found in Homo sapiens (Human).